The primary structure comprises 114 residues: Small ribosomal subunit protein uS14m (114 aa).

This sequence belongs to the universal ribosomal protein uS14 family.

Its subcellular location is the mitochondrion. The polypeptide is Small ribosomal subunit protein uS14m (MRP2) (Eremothecium gossypii (strain ATCC 10895 / CBS 109.51 / FGSC 9923 / NRRL Y-1056) (Yeast)).